Here is a 1176-residue protein sequence, read N- to C-terminus: Serine/threonine-protein kinase pakF (1176 aa).

2 stretches are compositionally biased toward low complexity: residues 1–19 (MSNLKLSNNNNGNQKESSS) and 32–52 (NLLNSFSSNNSNNNLSNSGSN). Disordered stretches follow at residues 1-231 (MSNL…HESR) and 254-361 (LPST…KKTK). Over residues 64-76 (QLPPNYTPPPPPH) the composition is skewed to pro residues. Positions 92 to 133 (LNNENSDNNNNNNNNNNNNNNNNNNNNNNNNNNNEQLARTES) form a coiled coil. 3 stretches are compositionally biased toward low complexity: residues 93–125 (NNENSDNNNNNNNNNNNNNNNNNNNNNNNNNNN), 133–148 (SSVSIISSSSSGSNSG), and 156–172 (SSNISTDDSNTTTETYS). The segment covering 173-197 (MSPNQTLNSNIDSSEQQHQDLSSSV) has biased composition (polar residues). The span at 198–226 (NNNNNNNNNNNNNNNNNNNNNNNNNNNNN) shows a compositional bias: low complexity. The segment covering 254–289 (LPSTPTQQNVEIQTTNGGSSETSPNGLISPRPSNDQ) has biased composition (polar residues). Residues 316–353 (SLSSSTTTPSTTSSLTSSPSSSSLAISSPNTTAATTTN) show a composition bias toward low complexity. The CRIB domain occupies 370–383 (ISVPYNVIHKMHVD). Positions 394–646 (FILDEKLGDG…PIDLLCHPFL (253 aa)) constitute a Protein kinase domain. ATP contacts are provided by residues 400 to 408 (LGDGAYGSV) and K423. Residue D514 is the Proton acceptor of the active site. Disordered regions lie at residues 670 to 723 (IDDL…SDEL), 753 to 885 (QEEE…GNNL), 968 to 1083 (HTTS…TGRA), and 1112 to 1176 (NSNS…NIKK). Low complexity-rich tracts occupy residues 682–693 (SQSSSSSSPQSP) and 710–720 (SIISPIPSSPS). Composition is skewed to acidic residues over residues 767 to 789 (DEQDDEQDDEDDDDENEDDEDVD) and 813 to 844 (DQDDEEEDEEEDDEEEEEEEEDDDEINEDEEI). The stretch at 812 to 873 (SDQDDEEEDE…NKKKNKKNNL (62 aa)) forms a coiled coil. A compositionally biased stretch (basic residues) spans 852–870 (VRKKKNKSTKKSNKKKNKK). 2 stretches are compositionally biased toward polar residues: residues 873–884 (LSTIGKSGSGNN) and 968–985 (HTTSQPKQMQSKLSATNL). Composition is skewed to low complexity over residues 991 to 1044 (SSSP…RPNS), 1051 to 1066 (NNSSTTTTTNSNSSSS), and 1148 to 1176 (SSGSGSNSPSLSTNSSSTNSNNSVTNIKK).

Belongs to the protein kinase superfamily. STE Ser/Thr protein kinase family. STE20 subfamily. Requires Mg(2+) as cofactor.

It catalyses the reaction L-seryl-[protein] + ATP = O-phospho-L-seryl-[protein] + ADP + H(+). It carries out the reaction L-threonyl-[protein] + ATP = O-phospho-L-threonyl-[protein] + ADP + H(+). The protein is Serine/threonine-protein kinase pakF of Dictyostelium discoideum (Social amoeba).